The sequence spans 296 residues: Elongation factor Ts (296 aa).

The involved in Mg(2+) ion dislocation from EF-Tu stretch occupies residues 82–85 (TDFV).

The protein belongs to the EF-Ts family.

It localises to the cytoplasm. Functionally, associates with the EF-Tu.GDP complex and induces the exchange of GDP to GTP. It remains bound to the aminoacyl-tRNA.EF-Tu.GTP complex up to the GTP hydrolysis stage on the ribosome. This is Elongation factor Ts from Aromatoleum aromaticum (strain DSM 19018 / LMG 30748 / EbN1) (Azoarcus sp. (strain EbN1)).